We begin with the raw amino-acid sequence, 77 residues long: Sec-independent protein translocase protein TatA (77 aa).

The chain crosses the membrane as a helical span at residues 1 to 21 (MGSLSIWHWILVIAVVLLLFG). Positions 42–60 (GMQDDDKPADKPEPAKSIE) are enriched in basic and acidic residues. The disordered stretch occupies residues 42–77 (GMQDDDKPADKPEPAKSIEHNAAPTAARSDVGSKAV).

It belongs to the TatA/E family. In terms of assembly, the Tat system comprises two distinct complexes: a TatABC complex, containing multiple copies of TatA, TatB and TatC subunits, and a separate TatA complex, containing only TatA subunits. Substrates initially bind to the TatABC complex, which probably triggers association of the separate TatA complex to form the active translocon.

The protein resides in the cell inner membrane. Part of the twin-arginine translocation (Tat) system that transports large folded proteins containing a characteristic twin-arginine motif in their signal peptide across membranes. TatA could form the protein-conducting channel of the Tat system. The sequence is that of Sec-independent protein translocase protein TatA from Bradyrhizobium diazoefficiens (strain JCM 10833 / BCRC 13528 / IAM 13628 / NBRC 14792 / USDA 110).